Consider the following 135-residue polypeptide: Antennal-specific protein OS-C (135 aa).

Positions M1–A27 are cleaved as a signal peptide. The segment at V43–A84 is disordered. A compositionally biased stretch (acidic residues) spans D49 to E67.

As to expression, antenna. In the third antennal segment. Expressed in sencilla coeloconica.

This chain is Antennal-specific protein OS-C (Os-C), found in Drosophila melanogaster (Fruit fly).